We begin with the raw amino-acid sequence, 200 residues long: Nucleoside triphosphate pyrophosphatase (200 aa).

The Proton acceptor role is filled by Asp79.

Belongs to the Maf family. A divalent metal cation serves as cofactor.

Its subcellular location is the cytoplasm. It carries out the reaction a ribonucleoside 5'-triphosphate + H2O = a ribonucleoside 5'-phosphate + diphosphate + H(+). The enzyme catalyses a 2'-deoxyribonucleoside 5'-triphosphate + H2O = a 2'-deoxyribonucleoside 5'-phosphate + diphosphate + H(+). In terms of biological role, nucleoside triphosphate pyrophosphatase. May have a dual role in cell division arrest and in preventing the incorporation of modified nucleotides into cellular nucleic acids. This Legionella pneumophila (strain Paris) protein is Nucleoside triphosphate pyrophosphatase.